Consider the following 345-residue polypeptide: Biotin synthase (345 aa).

The region spanning 66–293 (NTVQLSTLLS…RAMVRLSAGR (228 aa)) is the Radical SAM core domain. Cys-81, Cys-85, and Cys-88 together coordinate [4Fe-4S] cluster. [2Fe-2S] cluster contacts are provided by Cys-125, Cys-156, Cys-216, and Arg-288.

Belongs to the radical SAM superfamily. Biotin synthase family. Homodimer. The cofactor is [4Fe-4S] cluster. [2Fe-2S] cluster is required as a cofactor.

It catalyses the reaction (4R,5S)-dethiobiotin + (sulfur carrier)-SH + 2 reduced [2Fe-2S]-[ferredoxin] + 2 S-adenosyl-L-methionine = (sulfur carrier)-H + biotin + 2 5'-deoxyadenosine + 2 L-methionine + 2 oxidized [2Fe-2S]-[ferredoxin]. Its pathway is cofactor biosynthesis; biotin biosynthesis; biotin from 7,8-diaminononanoate: step 2/2. In terms of biological role, catalyzes the conversion of dethiobiotin (DTB) to biotin by the insertion of a sulfur atom into dethiobiotin via a radical-based mechanism. The sequence is that of Biotin synthase from Cupriavidus metallidurans (strain ATCC 43123 / DSM 2839 / NBRC 102507 / CH34) (Ralstonia metallidurans).